Reading from the N-terminus, the 248-residue chain is Ubiquinone/menaquinone biosynthesis C-methyltransferase UbiE (248 aa).

S-adenosyl-L-methionine is bound by residues serine 68 and aspartate 92.

This sequence belongs to the class I-like SAM-binding methyltransferase superfamily. MenG/UbiE family.

It catalyses the reaction a 2-demethylmenaquinol + S-adenosyl-L-methionine = a menaquinol + S-adenosyl-L-homocysteine + H(+). It carries out the reaction a 2-methoxy-6-(all-trans-polyprenyl)benzene-1,4-diol + S-adenosyl-L-methionine = a 5-methoxy-2-methyl-3-(all-trans-polyprenyl)benzene-1,4-diol + S-adenosyl-L-homocysteine + H(+). Its pathway is quinol/quinone metabolism; menaquinone biosynthesis; menaquinol from 1,4-dihydroxy-2-naphthoate: step 2/2. It participates in cofactor biosynthesis; ubiquinone biosynthesis. Functionally, methyltransferase required for the conversion of demethylmenaquinol (DMKH2) to menaquinol (MKH2) and the conversion of 2-polyprenyl-6-methoxy-1,4-benzoquinol (DDMQH2) to 2-polyprenyl-3-methyl-6-methoxy-1,4-benzoquinol (DMQH2). This chain is Ubiquinone/menaquinone biosynthesis C-methyltransferase UbiE, found in Rickettsia bellii (strain RML369-C).